Consider the following 507-residue polypeptide: Acetylcholine receptor subunit beta-type lev-1 (507 aa).

Positions 1-31 are cleaved as a signal peptide; it reads MMLGGGGGCGAGGTWLGFLVFLAVSLRNHST. N-linked (GlcNAc...) asparagine glycosylation is found at asparagine 28, asparagine 58, and asparagine 109. The Extracellular segment spans residues 32–138; it reads CEDIDAEDRL…NNADGNYEVS (107 aa). Residues 139 to 159 traverse the membrane as a helical segment; that stretch reads FMCNVLILSTGTVLWVPPAIY. An intrachain disulfide couples cysteine 163 to cysteine 177. The next 3 helical transmembrane spans lie at 243 to 263, 271 to 291, and 305 to 325; these read VVLI…FYLP, GLTM…SKIL, and LLLT…ICNI. The disordered stretch occupies residues 373–392; the sequence is GPSVEENPMRSGEHHPLCRH. Positions 379-392 are enriched in basic and acidic residues; it reads NPMRSGEHHPLCRH. Residues 454 to 474 form a helical membrane-spanning segment; that stretch reads FLLYGFFGATVGGTIGIIFTA.

This sequence belongs to the ligand-gated ion channel (TC 1.A.9) family. Acetylcholine receptor (TC 1.A.9.1) subfamily. In terms of assembly, interacts with unc-29. Component of nicotinic acetylcholine receptor composed of 2 non-alpha subunits lev-1 and unc-29, and 3 alpha subunits unc-38, unc-63 and lev-8.

It is found in the postsynaptic cell membrane. The protein localises to the cell membrane. In terms of biological role, non-alpha subunit of nicotinic acetylcholine receptor (nAChR). Involved in nAChR sensitivity to nicotine. The polypeptide is Acetylcholine receptor subunit beta-type lev-1 (lev-1) (Caenorhabditis elegans).